We begin with the raw amino-acid sequence, 358 residues long: Nicotinate-nucleotide--dimethylbenzimidazole phosphoribosyltransferase (358 aa).

Catalysis depends on Glu323, which acts as the Proton acceptor.

Belongs to the CobT family.

It catalyses the reaction 5,6-dimethylbenzimidazole + nicotinate beta-D-ribonucleotide = alpha-ribazole 5'-phosphate + nicotinate + H(+). The protein operates within nucleoside biosynthesis; alpha-ribazole biosynthesis; alpha-ribazole from 5,6-dimethylbenzimidazole: step 1/2. Its function is as follows. Catalyzes the synthesis of alpha-ribazole-5'-phosphate from nicotinate mononucleotide (NAMN) and 5,6-dimethylbenzimidazole (DMB). In Oleidesulfovibrio alaskensis (strain ATCC BAA-1058 / DSM 17464 / G20) (Desulfovibrio alaskensis), this protein is Nicotinate-nucleotide--dimethylbenzimidazole phosphoribosyltransferase.